We begin with the raw amino-acid sequence, 342 residues long: NADH-quinone oxidoreductase subunit H 1 (342 aa).

The next 8 membrane-spanning stretches (helical) occupy residues 7-27 (FLLEKTIIVTAVFTISLVIAM), 78-98 (ALFILGPSIAMMTACLTGAVI), 120-140 (IGVLYIFAVVSIGVYGVMIGG), 166-186 (MGLSIIALVMTTGTLSIGEIV), 193-213 (WWNIVYQPLGFFIFMVCSFAE), 245-265 (LFAEYINMFISSAVMSAFYFG), 284-304 (ILGTLFFFTKIVLFIFLFMWV), and 322-342 (KIMIPMAIINIIITGACILLF).

The protein belongs to the complex I subunit 1 family. As to quaternary structure, NDH-1 is composed of 14 different subunits. Subunits NuoA, H, J, K, L, M, N constitute the membrane sector of the complex.

It localises to the cell inner membrane. The catalysed reaction is a quinone + NADH + 5 H(+)(in) = a quinol + NAD(+) + 4 H(+)(out). In terms of biological role, NDH-1 shuttles electrons from NADH, via FMN and iron-sulfur (Fe-S) centers, to quinones in the respiratory chain. The immediate electron acceptor for the enzyme in this species is believed to be ubiquinone. Couples the redox reaction to proton translocation (for every two electrons transferred, four hydrogen ions are translocated across the cytoplasmic membrane), and thus conserves the redox energy in a proton gradient. This subunit may bind ubiquinone. The protein is NADH-quinone oxidoreductase subunit H 1 of Cytophaga hutchinsonii (strain ATCC 33406 / DSM 1761 / CIP 103989 / NBRC 15051 / NCIMB 9469 / D465).